The chain runs to 196 residues: uncharacterized protein (196 aa).

The helical transmembrane segment at 11–31 (ICGFLLVILTIGGVLGGVYLV) threads the bilayer.

It is found in the membrane. This is an uncharacterized protein from Mycoplasma genitalium (strain ATCC 33530 / DSM 19775 / NCTC 10195 / G37) (Mycoplasmoides genitalium).